The primary structure comprises 382 residues: Type II secretion system protein L (382 aa).

Topologically, residues 1 to 233 are cytoplasmic; the sequence is MSGVSALFLP…QQSSQWRRWR (233 aa). The chain crosses the membrane as a helical span at residues 234-254; sequence PLLGLVGLWLVLQWGFTLVQA. Residues 255–382 are Periplasmic-facing; that stretch reads WQLQREGDRY…TVSARLVIGG (128 aa).

It belongs to the GSP L family. Type II secretion system is composed of four main components: the outer membrane complex, the inner membrane complex, the cytoplasmic secretion ATPase and the periplasm-spanning pseudopilus. Forms homodimers. Interacts with XcpZ/GspM. Interacts with XcpR/GspE and XcpS/GspF.

The protein resides in the cell inner membrane. Inner membrane component of the type II secretion system required for the energy-dependent secretion of extracellular factors such as proteases and toxins from the periplasm. Plays a role in the complex assembly and recruits XcpZ resulting in a stable complex in the inner membrane. Provides thus a link between the energy-providing XcpR protein in the cytoplasm and the rest of the T2SS machinery. The polypeptide is Type II secretion system protein L (xcpY) (Pseudomonas aeruginosa (strain ATCC 15692 / DSM 22644 / CIP 104116 / JCM 14847 / LMG 12228 / 1C / PRS 101 / PAO1)).